We begin with the raw amino-acid sequence, 932 residues long: MTEFLPFVARHIGPRHEDERAMLAALGLPSMETLITQAVPAPIRLNRALNLPAALSEADALAELGTIMGRNVVKKSFIGAGYHGVHTPPVIQRNLFENPAWYTAYTPYQSEISQGRLELLFHFQTLVAELTGLPVACASLLDEATAVAEAIGVACRHHRDKRSRILLAGELHPQTVDVVNTRAEPLGWEIATGSDVDDNTAAIVVPWPDTRGVYGDFAKVIADAKAKGALVIAVADPLALTIMEAPARWGADMAVGSMQRYGVPMGFGGPHAAYLAVSEALTRIIPGRIVGQSVDAHGRAAYRLALQTREQHIRRDKATSNICTAQALLANMAAAFAIWHGPAGLQAIATRVAALAARFAAALKAAGVEIAGESLFDTVTAKVPGKAAAIAAEADKGGRLIRIIDADTVGVTFDETSTEEDLTALASLFGAKPVGGDTVLVPGKERGEGFLTQEVFHSHRSETEMMRFLRRLADKDLALDRAMIPLGSCTMKLNAAAEMMPVSWNTVANLHPFAPAEQVQGYAKMTSDLEAWLCEITGFAGVSLQPNAGSQGEYAGLMAIRHYHQARGQGHRNICLIPSSAHGTNPASASMAGMSVVVVNCRPDGDIDIDDLKAKAEKHRDNLAAFMITYPSTYGVFEEGIKAFCEIVHDNGGQVYFDGANLNALVGLARPADIGADVCHMNLHKTFCIPHGGGGPGVGPIGVAKHLVPYLPGHVEAGSEHAVAAAQFGSASILVITWMYIRMMGGAGLKKATEAAILNANYIAHRLKGVYPILYTGAHDRVAHECIVDTRVLKDSAGITVEDVAKRLIDYGFHAPTMSWPVAGTLMIEPTESEPKLEIDRLCDAMIAIAGEAKKVADGVWPADDNPLANAPHTASDTLATEWKHPYTREEAVFPGGAFDPTAKYWPPVSRVDNVGGDRNLICSCPPVATYG.

The residue at position 685 (Lys-685) is an N6-(pyridoxal phosphate)lysine.

It belongs to the GcvP family. As to quaternary structure, the glycine cleavage system is composed of four proteins: P, T, L and H. Requires pyridoxal 5'-phosphate as cofactor.

The catalysed reaction is N(6)-[(R)-lipoyl]-L-lysyl-[glycine-cleavage complex H protein] + glycine + H(+) = N(6)-[(R)-S(8)-aminomethyldihydrolipoyl]-L-lysyl-[glycine-cleavage complex H protein] + CO2. Its function is as follows. The glycine cleavage system catalyzes the degradation of glycine. The P protein binds the alpha-amino group of glycine through its pyridoxal phosphate cofactor; CO(2) is released and the remaining methylamine moiety is then transferred to the lipoamide cofactor of the H protein. The protein is Glycine dehydrogenase (decarboxylating) of Brucella abortus (strain S19).